A 117-amino-acid polypeptide reads, in one-letter code: uncharacterized protein (117 aa).

Residues 1-18 form the signal peptide; it reads MKFFWVSSLLGLLGLSTA. N-linked (GlcNAc...) asparagine glycosylation occurs at Asn86.

This is an uncharacterized protein from Schizosaccharomyces pombe (strain 972 / ATCC 24843) (Fission yeast).